Here is a 310-residue protein sequence, read N- to C-terminus: Ninja-family protein 3 (310 aa).

Disordered stretches follow at residues 1–29 (MASR…GEPD), 68–140 (SLPG…DDAQ), and 156–215 (DQGN…EQPP). Residues 99-108 (ERWRRREMQS) show a composition bias toward basic and acidic residues. Composition is skewed to polar residues over residues 156-166 (DQGNASSSMPE) and 176-193 (KSTS…QNKS).

This sequence belongs to the Ninja family.

Its subcellular location is the nucleus. The sequence is that of Ninja-family protein 3 (AFP-D1) from Triticum aestivum (Wheat).